The chain runs to 302 residues: RNA polymerase sigma factor RpoH (302 aa).

Residues 57–126 are sigma-70 factor domain-2; that stretch reads LVTSHLRLVA…IQEYILRSWS (70 aa). An Interaction with polymerase core subunit RpoC motif is present at residues 81 to 84; that stretch reads ELIS. A sigma-70 factor domain-4 region spans residues 235 to 286; that stretch reads AMDKLNDREKHILTERRLSDNPKTLEELSQVYGVSRERVRQIEVRAFDKLQK. Positions 259–278 form a DNA-binding region, H-T-H motif; that stretch reads LEELSQVYGVSRERVRQIEV.

It belongs to the sigma-70 factor family. RpoH subfamily. Interacts with the RNA polymerase core enzyme.

The protein localises to the cytoplasm. Functionally, sigma factors are initiation factors that promote the attachment of RNA polymerase to specific initiation sites and are then released. This sigma factor is involved in regulation of expression of heat shock genes. This chain is RNA polymerase sigma factor RpoH, found in Zymomonas mobilis subsp. mobilis (strain ATCC 31821 / ZM4 / CP4).